We begin with the raw amino-acid sequence, 122 residues long: NADH-quinone oxidoreductase subunit A (122 aa).

The next 3 helical transmembrane spans lie at 10-30 (MIVG…LTLG), 66-86 (IFAL…PWAV), and 91-111 (LGLF…IGLA).

This sequence belongs to the complex I subunit 3 family. As to quaternary structure, NDH-1 is composed of 14 different subunits. Subunits NuoA, H, J, K, L, M, N constitute the membrane sector of the complex.

It is found in the cell membrane. The catalysed reaction is a quinone + NADH + 5 H(+)(in) = a quinol + NAD(+) + 4 H(+)(out). NDH-1 shuttles electrons from NADH, via FMN and iron-sulfur (Fe-S) centers, to quinones in the respiratory chain. The immediate electron acceptor for the enzyme in this species is believed to be a menaquinone. Couples the redox reaction to proton translocation (for every two electrons transferred, four hydrogen ions are translocated across the cytoplasmic membrane), and thus conserves the redox energy in a proton gradient. In Bacillus cytotoxicus (strain DSM 22905 / CIP 110041 / 391-98 / NVH 391-98), this protein is NADH-quinone oxidoreductase subunit A.